A 219-amino-acid chain; its full sequence is Ribosome maturation factor RimP (219 aa).

2 disordered regions span residues 1–38 and 189–219; these read MTQR…LATR and VEFT…DEER. Acidic residues predominate over residues 198–219; it reads DAFDGTDEAGDFDDDDVEDEER.

The protein belongs to the RimP family.

It localises to the cytoplasm. Functionally, required for maturation of 30S ribosomal subunits. This is Ribosome maturation factor RimP from Salinispora arenicola (strain CNS-205).